The chain runs to 224 residues: Small ribosomal subunit protein uS2 (224 aa).

The segment covering 1 to 14 (MAEAKPAPEKEAAV) has biased composition (basic and acidic residues). A disordered region spans residues 1 to 32 (MAEAKPAPEKEAAVKTESVPVADDEAASAKEG).

It belongs to the universal ribosomal protein uS2 family.

The protein is Small ribosomal subunit protein uS2 of Methanosarcina mazei (strain ATCC BAA-159 / DSM 3647 / Goe1 / Go1 / JCM 11833 / OCM 88) (Methanosarcina frisia).